A 102-amino-acid chain; its full sequence is Small ribosomal subunit protein uS14 (102 aa).

It belongs to the universal ribosomal protein uS14 family. As to quaternary structure, part of the 30S ribosomal subunit. Contacts proteins S3 and S10.

Binds 16S rRNA, required for the assembly of 30S particles and may also be responsible for determining the conformation of the 16S rRNA at the A site. This is Small ribosomal subunit protein uS14 from Wolbachia sp. subsp. Brugia malayi (strain TRS).